A 141-amino-acid polypeptide reads, in one-letter code: Large ribosomal subunit protein uL11 (141 aa).

The protein belongs to the universal ribosomal protein uL11 family. As to quaternary structure, part of the ribosomal stalk of the 50S ribosomal subunit. Interacts with L10 and the large rRNA to form the base of the stalk. L10 forms an elongated spine to which L12 dimers bind in a sequential fashion forming a multimeric L10(L12)X complex. In terms of processing, one or more lysine residues are methylated.

In terms of biological role, forms part of the ribosomal stalk which helps the ribosome interact with GTP-bound translation factors. This Streptococcus pyogenes serotype M1 protein is Large ribosomal subunit protein uL11.